Here is a 313-residue protein sequence, read N- to C-terminus: Aspartate carbamoyltransferase catalytic subunit (313 aa).

Carbamoyl phosphate is bound by residues Arg59 and Thr60. Lys87 lines the L-aspartate pocket. 3 residues coordinate carbamoyl phosphate: Arg109, His137, and Gln140. Residues Arg170 and Arg224 each coordinate L-aspartate. Carbamoyl phosphate-binding residues include Gly265 and Pro266.

This sequence belongs to the aspartate/ornithine carbamoyltransferase superfamily. ATCase family. Heterododecamer (2C3:3R2) of six catalytic PyrB chains organized as two trimers (C3), and six regulatory PyrI chains organized as three dimers (R2).

It catalyses the reaction carbamoyl phosphate + L-aspartate = N-carbamoyl-L-aspartate + phosphate + H(+). It functions in the pathway pyrimidine metabolism; UMP biosynthesis via de novo pathway; (S)-dihydroorotate from bicarbonate: step 2/3. In terms of biological role, catalyzes the condensation of carbamoyl phosphate and aspartate to form carbamoyl aspartate and inorganic phosphate, the committed step in the de novo pyrimidine nucleotide biosynthesis pathway. The chain is Aspartate carbamoyltransferase catalytic subunit from Rhizobium meliloti (strain 1021) (Ensifer meliloti).